The following is a 359-amino-acid chain: Peptide chain release factor 1 (359 aa).

At Gln235 the chain carries N5-methylglutamine.

It belongs to the prokaryotic/mitochondrial release factor family. Post-translationally, methylated by PrmC. Methylation increases the termination efficiency of RF1.

The protein localises to the cytoplasm. In terms of biological role, peptide chain release factor 1 directs the termination of translation in response to the peptide chain termination codons UAG and UAA. The sequence is that of Peptide chain release factor 1 from Ehrlichia ruminantium (strain Gardel).